The primary structure comprises 625 residues: TORTIFOLIA1-like protein 4 (625 aa).

The segment at 1 to 34 (MSVHGRFPASPPISLSPSSSSTSPSSQSPSTPPD) is disordered. Residues 12–29 (PISLSPSSSSTSPSSQSP) show a composition bias toward low complexity. 5 HEAT repeats span residues 69–106 (DSFS…YHGD), 110–147 (PHLA…HVTR), 149–186 (PFAS…AATD), 190–227 (EQLR…AGGA), and 230–268 (KPVL…AEDL). The segment at 391–466 (SVDNKGPHFT…VKNCKDDVEE (76 aa)) is disordered. 3 stretches are compositionally biased toward basic and acidic residues: residues 404-413 (KSSEETEEKA), 420-434 (IIKH…EDSK), and 455-466 (DSVKNCKDDVEE). Phosphoserine is present on serine 475. The tract at residues 582-625 (GMRESTDTNNGQRGGSVFQKRSRRDQFQDCMHTTLQKPTTRLST) is disordered. A compositionally biased stretch (polar residues) spans 612 to 625 (MHTTLQKPTTRLST).

This Arabidopsis thaliana (Mouse-ear cress) protein is TORTIFOLIA1-like protein 4.